Consider the following 580-residue polypeptide: MGKGTDKLYITHSEWASEDAYSASAGAGVGKARRGVGEASFKRLPFRFCSLSLQPFEHPVCTQSGTIFDLTSILPWIKKHGTNPVDGTPLKGSDLIKLTIAKNDAGEYIDPVTYKVLTDNTHVVALRNTGNVFAWDTIERLNIKGKMWRDLVSDEEFTRKDIITLQDPQNIESRDLSRFNHIKEGESGLSDEQLREREDPSRNVNVNALGSSAKILKAREAVAKARQERAQKAGNAASTPVAKTDAPVKSAQKTASYQSGKPVPYNAARYTTGLAAASFTSTGMTPHTSAELALLSDEDYMLKRGRVKQKGYARISTTSGDINLELHTEYAPKAVWNFIKLAKKGYYKDVTFHRNIKGFMIQGGDPTGTGRGGESIWGKYFNDEFEGPLKHDSRGTLSMANKGKNTNSSQFFIAYRALPHLNLKHTIFGHVIDDPTPSSPTLNKLETHPVNPTTNRPTPDIRIVDVTIFVDPFEEFLKQKKQSEQSAENEANRTAENDEEGSRRAEDDQITWTGKRVRGPGASKEESSTTVGKYLKAALSERAAHDEDEIVEFVDEEPTSEPAKKKFKGIGGFGDFSSWD.

One can recognise a U-box domain in the interval 42-115 (KRLPFRFCSL…GEYIDPVTYK (74 aa)). Disordered stretches follow at residues 182–201 (IKEGESGLSDEQLREREDPS), 227–259 (QERAQKAGNAASTPVAKTDAPVKSAQKTASYQS), 439–459 (SPTLNKLETHPVNPTTNRPTP), 479–530 (QKKQ…SSTT), and 553–580 (FVDEEPTSEPAKKKFKGIGGFGDFSSWD). Residues 309–468 (QKGYARISTT…PDIRIVDVTI (160 aa)) enclose the PPIase cyclophilin-type domain. Over residues 439–457 (SPTLNKLETHPVNPTTNRP) the composition is skewed to polar residues. Residues 490–507 (EANRTAENDEEGSRRAED) are compositionally biased toward basic and acidic residues.

The protein belongs to the cyclophilin-type PPIase family. PPIL2 subfamily.

Its subcellular location is the nucleus. The catalysed reaction is [protein]-peptidylproline (omega=180) = [protein]-peptidylproline (omega=0). The enzyme catalyses S-ubiquitinyl-[E2 ubiquitin-conjugating enzyme]-L-cysteine + [acceptor protein]-L-lysine = [E2 ubiquitin-conjugating enzyme]-L-cysteine + N(6)-ubiquitinyl-[acceptor protein]-L-lysine.. Its pathway is protein modification; protein ubiquitination. May catalyze the cis-trans isomerization of proline imidic peptide bonds in oligopeptides thereby assisting the folding of proteins. May also function as a chaperone, playing a role in intracellular transport of proteins. May also have a protein ubiquitin ligase activity acting as an E3 ubiquitin protein ligase or as a ubiquitin-ubiquitin ligase promoting elongation of ubiquitin chains on proteins. This Emericella nidulans (strain FGSC A4 / ATCC 38163 / CBS 112.46 / NRRL 194 / M139) (Aspergillus nidulans) protein is Peptidyl-prolyl cis-trans isomerase-like 2 (cyp8).